A 475-amino-acid polypeptide reads, in one-letter code: 3-isopropylmalate dehydratase large subunit (475 aa).

Positions 347, 407, and 410 each coordinate [4Fe-4S] cluster. Residues 418–442 (LAPGERSASTSNRNFEGRQGKGGRT) are disordered.

Belongs to the aconitase/IPM isomerase family. LeuC type 1 subfamily. Heterodimer of LeuC and LeuD. [4Fe-4S] cluster is required as a cofactor.

The enzyme catalyses (2R,3S)-3-isopropylmalate = (2S)-2-isopropylmalate. It functions in the pathway amino-acid biosynthesis; L-leucine biosynthesis; L-leucine from 3-methyl-2-oxobutanoate: step 2/4. Its function is as follows. Catalyzes the isomerization between 2-isopropylmalate and 3-isopropylmalate, via the formation of 2-isopropylmaleate. The protein is 3-isopropylmalate dehydratase large subunit of Streptomyces griseus subsp. griseus (strain JCM 4626 / CBS 651.72 / NBRC 13350 / KCC S-0626 / ISP 5235).